Reading from the N-terminus, the 225-residue chain is NAD(P)H-quinone oxidoreductase subunit K, chloroplastic (225 aa).

Positions 43, 44, 108, and 139 each coordinate [4Fe-4S] cluster.

This sequence belongs to the complex I 20 kDa subunit family. NDH is composed of at least 16 different subunits, 5 of which are encoded in the nucleus. Requires [4Fe-4S] cluster as cofactor.

The protein localises to the plastid. It localises to the chloroplast thylakoid membrane. It catalyses the reaction a plastoquinone + NADH + (n+1) H(+)(in) = a plastoquinol + NAD(+) + n H(+)(out). It carries out the reaction a plastoquinone + NADPH + (n+1) H(+)(in) = a plastoquinol + NADP(+) + n H(+)(out). In terms of biological role, NDH shuttles electrons from NAD(P)H:plastoquinone, via FMN and iron-sulfur (Fe-S) centers, to quinones in the photosynthetic chain and possibly in a chloroplast respiratory chain. The immediate electron acceptor for the enzyme in this species is believed to be plastoquinone. Couples the redox reaction to proton translocation, and thus conserves the redox energy in a proton gradient. The sequence is that of NAD(P)H-quinone oxidoreductase subunit K, chloroplastic from Lepidium virginicum (Virginia pepperweed).